A 506-amino-acid chain; its full sequence is uncharacterized protein (506 aa).

It to group II intron maturases.

The protein resides in the plastid. The protein localises to the chloroplast. This is an uncharacterized protein from Euglena gracilis.